Consider the following 154-residue polypeptide: Probable chemoreceptor glutamine deamidase CheD (154 aa).

This sequence belongs to the CheD family.

The enzyme catalyses L-glutaminyl-[protein] + H2O = L-glutamyl-[protein] + NH4(+). Probably deamidates glutamine residues to glutamate on methyl-accepting chemotaxis receptors (MCPs), playing an important role in chemotaxis. This Methanococcus maripaludis (strain C5 / ATCC BAA-1333) protein is Probable chemoreceptor glutamine deamidase CheD.